We begin with the raw amino-acid sequence, 257 residues long: Small ribosomal subunit protein uS3 (257 aa).

The KH type-2 domain occupies 39–112; it reads IRKFLNKKYN…EIVFNVVEVR (74 aa). Positions 217 to 257 are disordered; that stretch reads HEELRKERQSSASSNHGGGKRRPSRKGPRRSQEDAATEGGN. A compositionally biased stretch (basic residues) spans 234–245; it reads GGKRRPSRKGPR.

Belongs to the universal ribosomal protein uS3 family. As to quaternary structure, part of the 30S ribosomal subunit. Forms a tight complex with proteins S10 and S14.

Functionally, binds the lower part of the 30S subunit head. Binds mRNA in the 70S ribosome, positioning it for translation. The sequence is that of Small ribosomal subunit protein uS3 from Haploplasma axanthum (Acholeplasma axanthum).